We begin with the raw amino-acid sequence, 407 residues long: Peptidase T (407 aa).

His81 lines the Zn(2+) pocket. Asp83 is an active-site residue. Asp142 contributes to the Zn(2+) binding site. Glu176 functions as the Proton acceptor in the catalytic mechanism. Residues Glu177, Asp199, and His381 each coordinate Zn(2+).

It belongs to the peptidase M20B family. The cofactor is Zn(2+).

It localises to the cytoplasm. It catalyses the reaction Release of the N-terminal residue from a tripeptide.. In terms of biological role, cleaves the N-terminal amino acid of tripeptides. The chain is Peptidase T from Streptococcus sanguinis (strain SK36).